Here is a 493-residue protein sequence, read N- to C-terminus: Ketol-acid reductoisomerase (NADP(+)) (493 aa).

The KARI N-terminal Rossmann domain occupies 14–208 (LDQLGRCRFM…GGHRAGVLES (195 aa)). Residues 45 to 48 (CGAQ), arginine 68, arginine 76, serine 78, and 108 to 110 (DKQ) contribute to the NADP(+) site. Histidine 132 is a catalytic residue. Glycine 158 is a binding site for NADP(+). 2 KARI C-terminal knotted domains span residues 209-345 (SFVA…APKG) and 346-486 (ENIK…MTDM). The Mg(2+) site is built by aspartate 217, glutamate 221, glutamate 390, and glutamate 394. A substrate-binding site is contributed by serine 415.

This sequence belongs to the ketol-acid reductoisomerase family. Mg(2+) is required as a cofactor.

The catalysed reaction is (2R)-2,3-dihydroxy-3-methylbutanoate + NADP(+) = (2S)-2-acetolactate + NADPH + H(+). It carries out the reaction (2R,3R)-2,3-dihydroxy-3-methylpentanoate + NADP(+) = (S)-2-ethyl-2-hydroxy-3-oxobutanoate + NADPH + H(+). The protein operates within amino-acid biosynthesis; L-isoleucine biosynthesis; L-isoleucine from 2-oxobutanoate: step 2/4. Its pathway is amino-acid biosynthesis; L-valine biosynthesis; L-valine from pyruvate: step 2/4. Involved in the biosynthesis of branched-chain amino acids (BCAA). Catalyzes an alkyl-migration followed by a ketol-acid reduction of (S)-2-acetolactate (S2AL) to yield (R)-2,3-dihydroxy-isovalerate. In the isomerase reaction, S2AL is rearranged via a Mg-dependent methyl migration to produce 3-hydroxy-3-methyl-2-ketobutyrate (HMKB). In the reductase reaction, this 2-ketoacid undergoes a metal-dependent reduction by NADPH to yield (R)-2,3-dihydroxy-isovalerate. The sequence is that of Ketol-acid reductoisomerase (NADP(+)) from Histophilus somni (strain 2336) (Haemophilus somnus).